Consider the following 122-residue polypeptide: MIQLESYLRVADNSGAKVIKVIQVSGGSKRKTGSIGDIVVASVREAVPNTDIKKGDIVRAVVVRTKKEIRRPDGTYIRFDDNAAVIIDKQNQPKGTRVFGPVARELREKGFSKIASLAQEVW.

Belongs to the universal ribosomal protein uL14 family. As to quaternary structure, part of the 50S ribosomal subunit. Forms a cluster with proteins L3 and L19. In the 70S ribosome, L14 and L19 interact and together make contacts with the 16S rRNA in bridges B5 and B8.

Functionally, binds to 23S rRNA. Forms part of two intersubunit bridges in the 70S ribosome. This Kosmotoga olearia (strain ATCC BAA-1733 / DSM 21960 / TBF 19.5.1) protein is Large ribosomal subunit protein uL14.